A 284-amino-acid polypeptide reads, in one-letter code: Polyamine aminopropyltransferase (284 aa).

The PABS domain occupies 2 to 237 (ELWYTEEQTQ…GYWLFGFASK (236 aa)). S-methyl-5'-thioadenosine is bound at residue Gln31. Spermidine-binding residues include His62 and Asp86. Residues Glu106 and 137–138 (DG) contribute to the S-methyl-5'-thioadenosine site. The active-site Proton acceptor is the Asp155. A spermidine-binding site is contributed by 155–158 (DSTD). Pro162 lines the S-methyl-5'-thioadenosine pocket.

Belongs to the spermidine/spermine synthase family. In terms of assembly, homodimer or homotetramer.

It is found in the cytoplasm. It catalyses the reaction S-adenosyl 3-(methylsulfanyl)propylamine + putrescine = S-methyl-5'-thioadenosine + spermidine + H(+). Its pathway is amine and polyamine biosynthesis; spermidine biosynthesis; spermidine from putrescine: step 1/1. Its function is as follows. Catalyzes the irreversible transfer of a propylamine group from the amino donor S-adenosylmethioninamine (decarboxy-AdoMet) to putrescine (1,4-diaminobutane) to yield spermidine. The polypeptide is Polyamine aminopropyltransferase (Alkaliphilus metalliredigens (strain QYMF)).